We begin with the raw amino-acid sequence, 257 residues long: Beta-fibrinogenase mucrofibrase-3 (257 aa).

The signal sequence occupies residues 1-18; sequence MVLIRVLANLLILQLSYA. The propeptide occupies 19–24; the sequence is QKSSEL. Positions 25 to 248 constitute a Peptidase S1 domain; the sequence is VIGGDECNIN…HLDWIKGIIA (224 aa). Disulfide bonds link Cys-31–Cys-162, Cys-49–Cys-65, Cys-97–Cys-255, Cys-141–Cys-209, Cys-173–Cys-188, and Cys-199–Cys-224. Active-site charge relay system residues include His-64 and Asp-109. The active-site Charge relay system is the Ser-203.

Belongs to the peptidase S1 family. Snake venom subfamily. In terms of assembly, monomer. As to expression, expressed by the venom gland.

Its subcellular location is the secreted. Its function is as follows. Snake venom serine protease with fibrinogenolytic activities. Cleaves beta-chain of fibrinogen (FGB) efficiently and shows relatively lower activity on alpha-chain. The polypeptide is Beta-fibrinogenase mucrofibrase-3 (Protobothrops mucrosquamatus (Taiwan habu)).